The following is a 259-amino-acid chain: Caffeoyl-CoA O-methyltransferase 1 (259 aa).

Over residues 1 to 14 (MATTTTEATKTSST) the composition is skewed to low complexity. The disordered stretch occupies residues 1–29 (MATTTTEATKTSSTNGEDQKQSQNLRHQE). The residue at position 2 (Ala-2) is an N-acetylalanine. Position 33 (Lys-33) interacts with substrate. Residues Thr-75, Glu-97, 99–100 (GV), Ser-105, Asp-123, and Ala-152 contribute to the S-adenosyl-L-methionine site. Asp-175 contributes to the substrate binding site. Asp-175 is an a divalent metal cation binding site. Asp-177 contributes to the S-adenosyl-L-methionine binding site. Positions 201 and 202 each coordinate a divalent metal cation. Asn-206 serves as a coordination point for substrate.

It belongs to the class I-like SAM-binding methyltransferase superfamily. Cation-dependent O-methyltransferase family. CCoAMT subfamily. The cofactor is a divalent metal cation. As to expression, expressed in stems and roots. Detected in leaves, siliques, flower buds, flowers. Expressed in the tapetum, but not in the endothecium. Detected in the vascular system of leaves and all flower organs, including stigma, stamens, petals and sepals.

It catalyses the reaction (E)-caffeoyl-CoA + S-adenosyl-L-methionine = (E)-feruloyl-CoA + S-adenosyl-L-homocysteine + H(+). The protein operates within aromatic compound metabolism; phenylpropanoid biosynthesis. Methylates caffeoyl-CoA to feruloyl-CoA. Has a very low activity with caffeic acid and esculetin. Involved in scopoletin biosynthesis in roots. In Arabidopsis thaliana (Mouse-ear cress), this protein is Caffeoyl-CoA O-methyltransferase 1 (CCOAOMT1).